The following is a 1163-amino-acid chain: DNA-directed RNA polymerase subunit beta' (1163 aa).

Residues cysteine 59, cysteine 61, cysteine 74, and cysteine 77 each contribute to the Zn(2+) site. Aspartate 449, aspartate 451, and aspartate 453 together coordinate Mg(2+). The Zn(2+) site is built by cysteine 794, cysteine 868, cysteine 875, and cysteine 878.

It belongs to the RNA polymerase beta' chain family. In terms of assembly, the RNAP catalytic core consists of 2 alpha, 1 beta, 1 beta' and 1 omega subunit. When a sigma factor is associated with the core the holoenzyme is formed, which can initiate transcription. Mg(2+) serves as cofactor. It depends on Zn(2+) as a cofactor.

The enzyme catalyses RNA(n) + a ribonucleoside 5'-triphosphate = RNA(n+1) + diphosphate. Its function is as follows. DNA-dependent RNA polymerase catalyzes the transcription of DNA into RNA using the four ribonucleoside triphosphates as substrates. This Caldicellulosiruptor saccharolyticus (strain ATCC 43494 / DSM 8903 / Tp8T 6331) protein is DNA-directed RNA polymerase subunit beta'.